The sequence spans 732 residues: Elongation factor 2 (732 aa).

The tr-type G domain occupies 19-228 (ELVRNIGIVA…TKITFKDIVE (210 aa)). GTP contacts are provided by residues 28-35 (AHIDHGKT), 94-98 (DTPGH), and 148-151 (NKID). H598 carries the post-translational modification Diphthamide.

This sequence belongs to the TRAFAC class translation factor GTPase superfamily. Classic translation factor GTPase family. EF-G/EF-2 subfamily.

It localises to the cytoplasm. In terms of biological role, catalyzes the GTP-dependent ribosomal translocation step during translation elongation. During this step, the ribosome changes from the pre-translocational (PRE) to the post-translocational (POST) state as the newly formed A-site-bound peptidyl-tRNA and P-site-bound deacylated tRNA move to the P and E sites, respectively. Catalyzes the coordinated movement of the two tRNA molecules, the mRNA and conformational changes in the ribosome. In Thermoplasma volcanium (strain ATCC 51530 / DSM 4299 / JCM 9571 / NBRC 15438 / GSS1), this protein is Elongation factor 2.